Consider the following 434-residue polypeptide: Protein FAM83A (434 aa).

Residues 1-298 (MSRSRHLGKI…LYASSKPVMG (298 aa)) are DUF1669. The disordered stretch occupies residues 76–97 (REPPCPPDTLGGAEAGPKGLDS). 4 positions are modified to phosphoserine: Ser-301, Ser-327, Ser-348, and Ser-357. The tract at residues 308–399 (VPPGAAPANG…HDGPPAAVYS (92 aa)) is disordered. 2 stretches are compositionally biased toward low complexity: residues 320 to 332 (SSSS…RTSS) and 348 to 357 (SVSASSGPCS). Positions 358 to 369 (PAAPHPPPPPRF) are enriched in pro residues.

The protein belongs to the FAM83 family. Directly interacts (via DUF1669) with casein kinase isoforms CSNK1A1, CSNK1A1L, CSNK1D and CSNK1E. In terms of processing, phosphorylated upon EGFR activation in a breast cancer cell line.

It is found in the cytoplasm. Functionally, involved in mitochondrial maintenance during adipogenesis. May be acting by playing a role in the maintenance of normal mitochondrial function. In Homo sapiens (Human), this protein is Protein FAM83A.